We begin with the raw amino-acid sequence, 681 residues long: Dipeptidyl carboxypeptidase (681 aa).

H470 contacts Zn(2+). The active site involves E471. 2 residues coordinate Zn(2+): H474 and H477.

It belongs to the peptidase M3 family. Zn(2+) serves as cofactor.

Its subcellular location is the cytoplasm. It catalyses the reaction Hydrolysis of unblocked, C-terminal dipeptides from oligopeptides, with broad specificity. Does not hydrolyze bonds in which P1' is Pro, or both P1 and P1' are Gly.. Stimulated by Mn(2+), Mg(2+), Co(2+) and Ca(2+), inhibited by Cu(2+), Ni(2+), Zn(2+), chymostatin and 1,10-phenanthroline. In terms of biological role, removes dipeptides from the C-termini of N-blocked tripeptides, tetrapeptides and larger peptides. This chain is Dipeptidyl carboxypeptidase, found in Escherichia coli (strain K12).